The primary structure comprises 634 residues: Extracellular metalloproteinase MEP (634 aa).

A signal peptide spans 1-18; the sequence is MRGLLLAGALALPASVFA. A propeptide spanning residues 19 to 245 is cleaved from the precursor; the sequence is HPAHQSYGLN…IHGVVDYVAE (227 aa). H429 contacts Zn(2+). Residue E430 is part of the active site. Zn(2+) is bound at residue H433.

Belongs to the peptidase M36 family. It depends on Zn(2+) as a cofactor.

The protein localises to the secreted. Secreted metalloproteinase that allows assimilation of proteinaceous substrates and probably acts as a virulence factor. This is Extracellular metalloproteinase MEP (MEP) from Neosartorya fischeri (strain ATCC 1020 / DSM 3700 / CBS 544.65 / FGSC A1164 / JCM 1740 / NRRL 181 / WB 181) (Aspergillus fischerianus).